Reading from the N-terminus, the 246-residue chain is Adenosylcobinamide-GDP ribazoletransferase (246 aa).

6 helical membrane passes run 37-57 (FPAV…AGAL), 64-84 (ALAA…DGLA), 100-122 (LLAV…LQLL), 139-159 (ALVL…WWLM), 185-205 (LAAA…VLWW), and 223-243 (AGIE…GLWI).

The protein belongs to the CobS family. The cofactor is Mg(2+).

It localises to the cell inner membrane. The catalysed reaction is alpha-ribazole + adenosylcob(III)inamide-GDP = adenosylcob(III)alamin + GMP + H(+). It carries out the reaction alpha-ribazole 5'-phosphate + adenosylcob(III)inamide-GDP = adenosylcob(III)alamin 5'-phosphate + GMP + H(+). Its pathway is cofactor biosynthesis; adenosylcobalamin biosynthesis; adenosylcobalamin from cob(II)yrinate a,c-diamide: step 7/7. Its function is as follows. Joins adenosylcobinamide-GDP and alpha-ribazole to generate adenosylcobalamin (Ado-cobalamin). Also synthesizes adenosylcobalamin 5'-phosphate from adenosylcobinamide-GDP and alpha-ribazole 5'-phosphate. This is Adenosylcobinamide-GDP ribazoletransferase from Novosphingobium aromaticivorans (strain ATCC 700278 / DSM 12444 / CCUG 56034 / CIP 105152 / NBRC 16084 / F199).